A 442-amino-acid polypeptide reads, in one-letter code: UDP-N-acetylmuramoylalanine--D-glutamate ligase (442 aa).

109 to 115 (GSNGKTT) contributes to the ATP binding site.

This sequence belongs to the MurCDEF family.

Its subcellular location is the cytoplasm. It catalyses the reaction UDP-N-acetyl-alpha-D-muramoyl-L-alanine + D-glutamate + ATP = UDP-N-acetyl-alpha-D-muramoyl-L-alanyl-D-glutamate + ADP + phosphate + H(+). Its pathway is cell wall biogenesis; peptidoglycan biosynthesis. Its function is as follows. Cell wall formation. Catalyzes the addition of glutamate to the nucleotide precursor UDP-N-acetylmuramoyl-L-alanine (UMA). This Solibacter usitatus (strain Ellin6076) protein is UDP-N-acetylmuramoylalanine--D-glutamate ligase.